Here is a 115-residue protein sequence, read N- to C-terminus: Large ribosomal subunit protein bL19 (115 aa).

This sequence belongs to the bacterial ribosomal protein bL19 family.

Its function is as follows. This protein is located at the 30S-50S ribosomal subunit interface and may play a role in the structure and function of the aminoacyl-tRNA binding site. The protein is Large ribosomal subunit protein bL19 of Streptococcus equi subsp. zooepidemicus (strain H70).